A 560-amino-acid polypeptide reads, in one-letter code: Arginine--tRNA ligase (560 aa).

A 'HIGH' region motif is present at residues 121–131; sequence PNIAKPFSMGH.

This sequence belongs to the class-I aminoacyl-tRNA synthetase family. As to quaternary structure, monomer.

The protein localises to the cytoplasm. It catalyses the reaction tRNA(Arg) + L-arginine + ATP = L-arginyl-tRNA(Arg) + AMP + diphosphate. The protein is Arginine--tRNA ligase of Exiguobacterium sibiricum (strain DSM 17290 / CCUG 55495 / CIP 109462 / JCM 13490 / 255-15).